A 295-amino-acid chain; its full sequence is Trimeric intracellular cation channel type A (295 aa).

Topologically, residues 1 to 18 (MELLSALSLDDLAASFSK) are lumenal. The chain crosses the membrane as a helical span at residues 19 to 39 (LPVFPLFDVAYYIISILYLKY). Over 40–51 (EPGAVDLSKRSP) the chain is Cytoplasmic. A helical membrane pass occupies residues 52–72 (VASWLCAMLYCFGSYILADVL). The Lumenal portion of the chain corresponds to 73–84 (LGESPIHYFSNN). Gly-74 contributes to the Ca(2+) binding site. A helical transmembrane segment spans residues 85–105 (ANILLASAVWYLTFFCPLNIF). At 106–144 (YKIVSFLPVKLVLVGMKEVVRVRKIAMGIHHAHHHYHHG) the chain is on the cytoplasmic side. Residues Lys-122 and Arg-126 each contribute to the a 1,2-diacyl-sn-glycero-3-phospho-(1D-myo-inositol-4,5-bisphosphate) site. The helical transmembrane segment at 145–165 (WVIMVLIGWVKGSGVALMSNL) threads the bilayer. Residues 166 to 178 (EQLLRGVWKPETN) lie on the Lumenal side of the membrane. Residues 179–199 (EILHMSFPTKASLYGAILFTL) form a helical membrane-spanning segment. Over 200 to 201 (QQ) the chain is Cytoplasmic. A helical membrane pass occupies residues 202-222 (AHWLPISKAYLIFFFTLFMAV). The Lumenal segment spans residues 223–233 (CKIYMTATHSH). Residues 234-254 (GSPFAIFESGICYVLFAAANG) form a helical membrane-spanning segment. Over 255–295 (DHDDHGNHHHHHDDHDVSHSAGKSKEEHNEGTRKRKTKKAE) the chain is Cytoplasmic. Residues 258–295 (DHGNHHHHHDDHDVSHSAGKSKEEHNEGTRKRKTKKAE) are disordered. Positions 267-286 (DDHDVSHSAGKSKEEHNEGT) are enriched in basic and acidic residues.

Belongs to the TMEM38 family. In terms of assembly, homotrimer; conformation seems to be controled by binding to diacylglycerol (DAG).

The protein resides in the sarcoplasmic reticulum membrane. The protein localises to the nucleus membrane. It carries out the reaction K(+)(in) = K(+)(out). Its activity is regulated as follows. Channel activity is activated by a change of voltage within the sarcoplasmic reticulum lumen and blocked by luminal high Ca(2+) levels. Functionally, intracellular monovalent cation channel required for maintenance of rapid intracellular calcium release. Acts as a potassium counter-ion channel that functions in synchronization with calcium release from intracellular stores. Opened by a change of voltage within the sarcoplasmic reticulum lumen. The sequence is that of Trimeric intracellular cation channel type A (tmem38a) from Xenopus laevis (African clawed frog).